Reading from the N-terminus, the 617-residue chain is LEAF RUST 10 DISEASE-RESISTANCE LOCUS RECEPTOR-LIKE PROTEIN KINASE-like 2.4 (617 aa).

Residues Met-1 to Ser-26 form the signal peptide. Topologically, residues Lys-27–Lys-243 are extracellular. Residues Asn-41, Asn-69, Asn-86, Asn-112, and Asn-184 are each glycosylated (N-linked (GlcNAc...) asparagine). Residues Ile-244–Ile-264 form a helical membrane-spanning segment. Residues Ile-265–Ile-617 lie on the Cytoplasmic side of the membrane. One can recognise a Protein kinase domain in the interval Asn-307–Leu-594. ATP contacts are provided by residues Val-313–Val-321 and Lys-335. Phosphotyrosine is present on Tyr-380. Asp-431 acts as the Proton acceptor in catalysis. Residues Thr-468 and Thr-471 each carry the phosphothreonine modification.

It belongs to the protein kinase superfamily. Ser/Thr protein kinase family.

It localises to the membrane. The enzyme catalyses L-seryl-[protein] + ATP = O-phospho-L-seryl-[protein] + ADP + H(+). It catalyses the reaction L-threonyl-[protein] + ATP = O-phospho-L-threonyl-[protein] + ADP + H(+). This Arabidopsis thaliana (Mouse-ear cress) protein is LEAF RUST 10 DISEASE-RESISTANCE LOCUS RECEPTOR-LIKE PROTEIN KINASE-like 2.4.